The chain runs to 201 residues: Small ribosomal subunit protein uS4c (201 aa).

The tract at residues 15-44 is disordered; it reads LGALPGLTNKRPRAGSDLRNQSRSGKKSQY. The region spanning 89 to 150 is the S4 RNA-binding domain; that stretch reads MRLDNILFRL…EQKSKVLIQN (62 aa).

This sequence belongs to the universal ribosomal protein uS4 family. In terms of assembly, part of the 30S ribosomal subunit. Contacts protein S5. The interaction surface between S4 and S5 is involved in control of translational fidelity.

The protein resides in the plastid. Its subcellular location is the chloroplast. In terms of biological role, one of the primary rRNA binding proteins, it binds directly to 16S rRNA where it nucleates assembly of the body of the 30S subunit. Its function is as follows. With S5 and S12 plays an important role in translational accuracy. The polypeptide is Small ribosomal subunit protein uS4c (rps4) (Lactuca sativa (Garden lettuce)).